The sequence spans 353 residues: Holliday junction branch migration complex subunit RuvB (353 aa).

The interval Met1–Tyr183 is large ATPase domain (RuvB-L). ATP contacts are provided by residues Leu22, Arg23, Gly64, Lys67, Thr68, Ser69, Glu130–Phe132, Arg173, Tyr183, and Arg220. Residue Thr68 participates in Mg(2+) binding. The segment at Asp184 to Asp254 is small ATPAse domain (RuvB-S). The segment at Ala257 to Ser353 is head domain (RuvB-H). DNA-binding residues include Arg312 and Arg317.

Belongs to the RuvB family. As to quaternary structure, homohexamer. Forms an RuvA(8)-RuvB(12)-Holliday junction (HJ) complex. HJ DNA is sandwiched between 2 RuvA tetramers; dsDNA enters through RuvA and exits via RuvB. An RuvB hexamer assembles on each DNA strand where it exits the tetramer. Each RuvB hexamer is contacted by two RuvA subunits (via domain III) on 2 adjacent RuvB subunits; this complex drives branch migration. In the full resolvosome a probable DNA-RuvA(4)-RuvB(12)-RuvC(2) complex forms which resolves the HJ.

Its subcellular location is the cytoplasm. It catalyses the reaction ATP + H2O = ADP + phosphate + H(+). Its function is as follows. The RuvA-RuvB-RuvC complex processes Holliday junction (HJ) DNA during genetic recombination and DNA repair, while the RuvA-RuvB complex plays an important role in the rescue of blocked DNA replication forks via replication fork reversal (RFR). RuvA specifically binds to HJ cruciform DNA, conferring on it an open structure. The RuvB hexamer acts as an ATP-dependent pump, pulling dsDNA into and through the RuvAB complex. RuvB forms 2 homohexamers on either side of HJ DNA bound by 1 or 2 RuvA tetramers; 4 subunits per hexamer contact DNA at a time. Coordinated motions by a converter formed by DNA-disengaged RuvB subunits stimulates ATP hydrolysis and nucleotide exchange. Immobilization of the converter enables RuvB to convert the ATP-contained energy into a lever motion, pulling 2 nucleotides of DNA out of the RuvA tetramer per ATP hydrolyzed, thus driving DNA branch migration. The RuvB motors rotate together with the DNA substrate, which together with the progressing nucleotide cycle form the mechanistic basis for DNA recombination by continuous HJ branch migration. Branch migration allows RuvC to scan DNA until it finds its consensus sequence, where it cleaves and resolves cruciform DNA. This is Holliday junction branch migration complex subunit RuvB from Parafrankia sp. (strain EAN1pec).